The sequence spans 2027 residues: Citron Rho-interacting kinase (2027 aa).

An N-acetylmethionine modification is found at M1. In terms of domain architecture, Protein kinase spans 97–360; it reads FEVRSLVGCG…FEGLCCHPFF (264 aa). ATP-binding positions include 103–111 and K126; that span reads VGCGHFAEV. Catalysis depends on D221, which acts as the Proton acceptor. The AGC-kinase C-terminal domain maps to 361 to 431; sequence SKIDWNNIRN…SKALGILGRS (71 aa). Phosphoserine is present on residues S433, S440, S480, and S582. The stretch at 453–1297 forms a coiled coil; that stretch reads IKSKELQDSQ…SAREEAAHRK (845 aa). The segment at 1091–1302 is interaction with Rho/Rac; the sequence is LAVKEHKAEI…AAHRKATDHP (212 aa). Phosphotyrosine is present on Y1196. Positions 1290–1303 are enriched in basic and acidic residues; the sequence is REEAAHRKATDHPH. 2 disordered regions span residues 1290–1310 and 1322–1351; these read REEA…PATA and SPEH…EFSR. A compositionally biased stretch (low complexity) spans 1327–1337; sequence PSAMSLLAPPS. Residues 1339-1351 are compositionally biased toward basic and acidic residues; sequence RRKESSTPEEFSR. A Phorbol-ester/DAG-type zinc finger spans residues 1362 to 1411; it reads PHRFNVGLNMRATKCAVCLDTVHFGRQASKCLECQVMCHPKCSTCLPATC. The PH domain maps to 1443 to 1563; it reads SLHLEGWMKV…WVTALESVVA (121 aa). One can recognise a CNH domain in the interval 1591-1881; it reads RLDMNCTLPF…RYLGPAISSG (291 aa). N6-acetyllysine is present on K1721. Residues 1905-2012 are disordered; the sequence is ESGTEHHRGP…RGRLPAGAVR (108 aa). At S1940 the chain carries Phosphoserine. A compositionally biased stretch (basic and acidic residues) spans 1948–2003; sequence SHPREPSTPHRYREGRTELRRDKSPGRPLEREKSPGRMLSTRRERSPGRLFEDSSR. Residues 1953–1958 carry the SH3-binding motif; sequence PSTPHR. S1993 carries the post-translational modification Phosphoserine. T2013 is modified (phosphothreonine).

The protein belongs to the protein kinase superfamily. AGC Ser/Thr protein kinase family. As to quaternary structure, directly interacts with KIF14 depending on the activation state (stronger interaction with the kinase-dead form). Homodimer. Interacts with TTC3.

It localises to the cytoplasm. The catalysed reaction is L-seryl-[protein] + ATP = O-phospho-L-seryl-[protein] + ADP + H(+). It catalyses the reaction L-threonyl-[protein] + ATP = O-phospho-L-threonyl-[protein] + ADP + H(+). Functionally, plays a role in cytokinesis. Required for KIF14 localization to the central spindle and midbody. Putative RHO/RAC effector that binds to the GTP-bound forms of RHO and RAC1. It probably binds p21 with a tighter specificity in vivo. Displays serine/threonine protein kinase activity. Plays an important role in the regulation of cytokinesis and the development of the central nervous system. Phosphorylates MYL9/MLC2. This is Citron Rho-interacting kinase (CIT) from Homo sapiens (Human).